The primary structure comprises 447 residues: Phosphoglucosamine mutase (447 aa).

The Phosphoserine intermediate role is filled by serine 104. Serine 104, aspartate 243, aspartate 245, and aspartate 247 together coordinate Mg(2+). Serine 104 carries the post-translational modification Phosphoserine.

It belongs to the phosphohexose mutase family. The cofactor is Mg(2+). Post-translationally, activated by phosphorylation.

The catalysed reaction is alpha-D-glucosamine 1-phosphate = D-glucosamine 6-phosphate. Its function is as follows. Catalyzes the conversion of glucosamine-6-phosphate to glucosamine-1-phosphate. This Corynebacterium diphtheriae (strain ATCC 700971 / NCTC 13129 / Biotype gravis) protein is Phosphoglucosamine mutase.